Reading from the N-terminus, the 523-residue chain is MFS-type transporter R5 (523 aa).

The interval 19–42 (QLNEATAQRESATNNPNDSSSIDE) is disordered. Positions 21-38 (NEATAQRESATNNPNDSS) are enriched in polar residues. N-linked (GlcNAc...) asparagine glycosylation is found at Asn-35, Asn-94, and Asn-143. 2 consecutive transmembrane segments (helical) span residues 183 to 203 (AYLTLGLVMGPALGPLIGGLL) and 211 to 231 (AIFWFLMILGGFFFVLTFTFF). Residues Asn-235 and Asn-250 are each glycosylated (N-linked (GlcNAc...) asparagine). 6 consecutive transmembrane segments (helical) span residues 291-311 (FIVCMYGALLFGGYASVISIF), 319-339 (YGYSQVQVGLCYLPFGVGSIL), 381-401 (LTISFPMIFATCGFVVAYGWL), 408-428 (VASVLVIVFLIANVFTGVLIA), 443-463 (ALGAAMNLTRCLMGAGGVAAV), and 470-490 (IGIGYTATATAGVWLAVLPAL).

It belongs to the major facilitator superfamily.

It is found in the membrane. In terms of biological role, MFS-type transporter; part of the gene cluster that mediates the biosynthesis of squalestatin S1 (SQS1, also known as zaragozic acid A), a heavily oxidized fungal polyketide that offers potent cholesterol lowering activity by targeting squalene synthase (SS). This chain is MFS-type transporter R5, found in Phoma sp. (strain ATCC 20986 / MF5453).